A 785-amino-acid polypeptide reads, in one-letter code: Rho GTPase-activating protein 10 (785 aa).

Positions 7-262 (EFSDCYLDSP…IRQNPKDHKR (256 aa)) constitute a BAR domain. The PH domain maps to 265-372 (QFTAEGYLYV…WLEVLGGKEA (108 aa)). Residues 389 to 574 (AQLDKMGFTI…ILIENHEKIF (186 aa)) enclose the Rho-GAP domain. The tract at residues 576 to 708 (TPPDATLPEP…PAVTPPSPKL (133 aa)) is disordered. Residues 584–595 (EPGPLSAPPNAP) show a composition bias toward pro residues. A compositionally biased stretch (basic residues) spans 598–608 (QSKRQGQRTKR). The segment covering 622 to 632 (GDRPSLPKEDT) has biased composition (basic and acidic residues). Residues 633–650 (PPSSLDSLSSPSPTTATA) show a composition bias toward low complexity. Polar residues predominate over residues 675 to 697 (APSQARSSAVQWLNPQSPTTPSC). Residues 727-785 (IISRKARAVYPCEAEHSSELSFEIGAIFEDVQTSREPGWLEGTLNGKRGLIPQNYVKLL) form the SH3 domain.

As to quaternary structure, interacts with PKN3. Interacts with caspase-activated PAK2 proteolytic fragment PAK-2p34; the interaction does not affect ARHGAP10 GTPase activation activity towards RHOA and CDC42. Interacts via its SH3 domain with PTK2/FAK1. Interacts with PTK2B/PYK2; the interaction negatively regulates ARHGAP10 GTPase-activating activity. Interacts with MICAL1 and WDR44; complex formation might transit from GRAF2/ARHGAP10-MICAL1 to GRAF2/ARHGAP10-WDR44 complexes.

The protein resides in the cytoplasm. It is found in the perinuclear region. Its subcellular location is the cell membrane. It localises to the endosome membrane. In terms of biological role, GTPase-activating protein that catalyzes the conversion of active GTP-bound Rho GTPases to their inactive GDP-bound form, thus suppressing various Rho GTPase-mediated cellular processes. Also converts Cdc42 to an inactive GDP-bound state. Essential for PTKB2 regulation of cytoskeletal organization via Rho family GTPases. Inhibits PAK2 proteolytic fragment PAK-2p34 kinase activity and changes its localization from the nucleus to the perinuclear region. Stabilizes PAK-2p34 thereby increasing stimulation of cell death. Associates with MICAL1 on the endosomal membrane to promote Rab8-Rab10-dependent tubule extension. After dissociation with MICAL1, recruits WDR44 which connects the endoplasmic reticulum (ER) with the endosomal tubule, thereby participating in the export of a subset of neosynthesized proteins. In Bos taurus (Bovine), this protein is Rho GTPase-activating protein 10 (ARHGAP10).